A 165-amino-acid polypeptide reads, in one-letter code: Growth arrest and DNA damage-inducible protein GADD45 alpha (165 aa).

Residue threonine 2 is modified to Phosphothreonine.

Belongs to the GADD45 family. As to quaternary structure, interacts with MAPK14. Predominantly monomeric but also forms dimers and other oligomers as concentration increases. Interacts with GADD45GIP1. Interacts weakly with PCNA. Interacts with AURKA, likely to compete with dimerization.

The protein resides in the nucleus. In T-cells, functions as a regulator of p38 MAPKs by inhibiting p88 phosphorylation and activity. Might affect PCNA interaction with some CDK (cell division protein kinase) complexes; stimulates DNA excision repair in vitro and inhibits entry of cells into S phase. This Homo sapiens (Human) protein is Growth arrest and DNA damage-inducible protein GADD45 alpha (GADD45A).